We begin with the raw amino-acid sequence, 491 residues long: Ketol-acid reductoisomerase (NADP(+)) (491 aa).

The 194-residue stretch at 15–208 folds into the KARI N-terminal Rossmann domain; sequence AQLGKCRFMG…GGHRAGVLES (194 aa). Residues 45-48, R68, R76, S78, and 108-110 contribute to the NADP(+) site; these read CGAQ and DKQ. H132 is an active-site residue. Residue G158 coordinates NADP(+). 2 consecutive KARI C-terminal knotted domains span residues 209–344 and 345–484; these read SFVA…TAPQ and YEGK…MTDM. Mg(2+) is bound by residues D217, E221, E389, and E393. Position 414 (S414) interacts with substrate.

The protein belongs to the ketol-acid reductoisomerase family. Mg(2+) serves as cofactor.

It catalyses the reaction (2R)-2,3-dihydroxy-3-methylbutanoate + NADP(+) = (2S)-2-acetolactate + NADPH + H(+). The catalysed reaction is (2R,3R)-2,3-dihydroxy-3-methylpentanoate + NADP(+) = (S)-2-ethyl-2-hydroxy-3-oxobutanoate + NADPH + H(+). Its pathway is amino-acid biosynthesis; L-isoleucine biosynthesis; L-isoleucine from 2-oxobutanoate: step 2/4. It participates in amino-acid biosynthesis; L-valine biosynthesis; L-valine from pyruvate: step 2/4. Functionally, involved in the biosynthesis of branched-chain amino acids (BCAA). Catalyzes an alkyl-migration followed by a ketol-acid reduction of (S)-2-acetolactate (S2AL) to yield (R)-2,3-dihydroxy-isovalerate. In the isomerase reaction, S2AL is rearranged via a Mg-dependent methyl migration to produce 3-hydroxy-3-methyl-2-ketobutyrate (HMKB). In the reductase reaction, this 2-ketoacid undergoes a metal-dependent reduction by NADPH to yield (R)-2,3-dihydroxy-isovalerate. The chain is Ketol-acid reductoisomerase (NADP(+)) from Escherichia coli (strain 55989 / EAEC).